The chain runs to 740 residues: Alpha-1,6-mannosylglycoprotein 6-beta-N-acetylglucosaminyltransferase A (740 aa).

Over 1 to 13 (MAFFSPWKLSSQK) the chain is Cytoplasmic. Residues 14-30 (LGFFLVTFGFIWGMMLL) form a helical; Signal-anchor for type II membrane protein membrane-spanning segment. The Lumenal portion of the chain corresponds to 31–740 (HFTIQQRTQP…GQVALCKDCL (710 aa)). 3 N-linked (GlcNAc...) asparagine glycosylation sites follow: asparagine 109, asparagine 114, and asparagine 117. 9 disulfides stabilise this stretch: cysteine 144–cysteine 182, cysteine 155–cysteine 195, cysteine 171–cysteine 337, cysteine 371–cysteine 625, cysteine 648–cysteine 723, cysteine 652–cysteine 725, cysteine 659–cysteine 712, cysteine 680–cysteine 701, and cysteine 736–cysteine 739. The sufficient for catalytic activity stretch occupies residues 212 to 740 (NSLAEIRTDF…GQVALCKDCL (529 aa)). N-linked (GlcNAc...) asparagine glycosylation is present at asparagine 333. 377–378 (DS) contributes to the substrate binding site. N-linked (GlcNAc...) asparagine glycosylation is found at asparagine 432 and asparagine 446. Glutamate 525 is a UDP-N-acetyl-alpha-D-glucosamine binding site. Residue lysine 553 participates in substrate binding.

This sequence belongs to the glycosyltransferase 18 family. Post-translationally, N-glycosylated. In terms of processing, a secreted form is released from the membrane after cleavage by gamma-secretase. As to expression, detected in kidney (at protein level). Detected in kidney.

It is found in the golgi apparatus membrane. Its subcellular location is the secreted. The catalysed reaction is N(4)-{beta-D-GlcNAc-(1-&gt;2)-[beta-D-GlcNAc-(1-&gt;4)]-alpha-D-Man-(1-&gt;3)-[beta-D-GlcNAc-(1-&gt;2)-alpha-D-Man-(1-&gt;6)]-beta-D-Man-(1-&gt;4)-beta-D-GlcNAc-(1-&gt;4)-beta-D-GlcNAc}-L-asparaginyl-[protein] + UDP-N-acetyl-alpha-D-glucosamine = N(4)-{beta-D-GlcNAc-(1-&gt;2)-[beta-D-GlcNAc-(1-&gt;4)]-alpha-D-Man-(1-&gt;3)-[beta-D-GlcNAc-(1-&gt;2)-[beta-D-GlcNAc-(1-&gt;6)]-alpha-D-Man-(1-&gt;6)]-beta-D-Man-(1-&gt;4)-beta-D-GlcNAc-(1-&gt;4)-beta-D-GlcNAc}-L-asparaginyl-[protein] + UDP + H(+). Its pathway is protein modification; protein glycosylation. In terms of biological role, catalyzes the addition of N-acetylglucosamine (GlcNAc) in beta 1-6 linkage to the alpha-linked mannose of biantennary N-linked oligosaccharides. Catalyzes an important step in the biosynthesis of branched, complex-type N-glycans, such as those found on EGFR, TGFR (TGF-beta receptor) and CDH2. Via its role in the biosynthesis of complex N-glycans, plays an important role in the activation of cellular signaling pathways, reorganization of the actin cytoskeleton, cell-cell adhesion and cell migration. MGAT5-dependent EGFR N-glycosylation enhances the interaction between EGFR and LGALS3 and thereby prevents rapid EGFR endocytosis and prolongs EGFR signaling. Required for efficient interaction between TGFB1 and its receptor. Enhances activation of intracellular signaling pathways by several types of growth factors, including FGF2, PDGF, IGF, TGFB1 and EGF. MGAT5-dependent CDH2 N-glycosylation inhibits CDH2-mediated homotypic cell-cell adhesion and contributes to the regulation of downstream signaling pathways. Promotes cell migration. Contributes to the regulation of the inflammatory response. MGAT5-dependent TCR N-glycosylation enhances the interaction between TCR and LGALS3, limits agonist-induced TCR clustering, and thereby dampens TCR-mediated responses to antigens. Required for normal leukocyte evasation and accumulation at sites of inflammation. Inhibits attachment of monocytes to the vascular endothelium and subsequent monocyte diapedesis. Functionally, promotes proliferation of umbilical vein endothelial cells and angiogenesis, at least in part by promoting the release of the growth factor FGF2 from the extracellular matrix. The polypeptide is Alpha-1,6-mannosylglycoprotein 6-beta-N-acetylglucosaminyltransferase A (Mgat5) (Rattus norvegicus (Rat)).